Consider the following 466-residue polypeptide: Neuraminidase (466 aa).

At 1-11 the chain is on the intravirion side; the sequence is MLPSTIQTLTL. Residues 12-34 traverse the membrane as a helical segment; that stretch reads FLTSGGVLLSLYVSASLSYLLYS. The involved in apical transport and lipid raft association stretch occupies residues 13-35; the sequence is LTSGGVLLSLYVSASLSYLLYSD. Residues 35-466 lie on the Virion surface side of the membrane; it reads DILLKFSPTK…DTVTGVDMAL (432 aa). Residues 38–86 form a hypervariable stalk region region; it reads LKFSPTKRTAPTMSLECVNVSNAQAVNHSATKEMTFLLPEPEWTYPRLS. N-linked (GlcNAc...) asparagine; by host glycans are attached at residues asparagine 56 and asparagine 64. Cystine bridges form between cysteine 87-cysteine 420, cysteine 122-cysteine 127, cysteine 182-cysteine 229, cysteine 231-cysteine 236, cysteine 277-cysteine 291, cysteine 279-cysteine 289, cysteine 318-cysteine 337, and cysteine 424-cysteine 447. The tract at residues 89–466 is head of neuraminidase; the sequence is GSTFQKALLI…DTVTGVDMAL (378 aa). Residue arginine 116 coordinates substrate. Residue asparagine 144 is glycosylated (N-linked (GlcNAc...) asparagine; by host). The Proton donor/acceptor role is filled by aspartate 149. Arginine 150 provides a ligand contact to substrate. A substrate-binding site is contributed by 275–276; it reads EE. Residue asparagine 284 is glycosylated (N-linked (GlcNAc...) asparagine; by host). Arginine 292 serves as a coordination point for substrate. Ca(2+) is bound by residues aspartate 293 and aspartate 324. Arginine 374 is a substrate binding site. Tyrosine 409 acts as the Nucleophile in catalysis.

The protein belongs to the glycosyl hydrolase 34 family. As to quaternary structure, homotetramer. It depends on Ca(2+) as a cofactor. N-glycosylated.

Its subcellular location is the virion membrane. The protein resides in the host apical cell membrane. The catalysed reaction is Hydrolysis of alpha-(2-&gt;3)-, alpha-(2-&gt;6)-, alpha-(2-&gt;8)- glycosidic linkages of terminal sialic acid residues in oligosaccharides, glycoproteins, glycolipids, colominic acid and synthetic substrates.. Its activity is regulated as follows. Inhibited by the neuraminidase inhibitors zanamivir (Relenza) and oseltamivir (Tamiflu). These drugs interfere with the release of progeny virus from infected cells and are effective against all influenza strains. Resistance to neuraminidase inhibitors is quite rare. Its function is as follows. Catalyzes the removal of terminal sialic acid residues from viral and cellular glycoconjugates. Cleaves off the terminal sialic acids on the glycosylated HA during virus budding to facilitate virus release. Additionally helps virus spread through the circulation by further removing sialic acids from the cell surface. These cleavages prevent self-aggregation and ensure the efficient spread of the progeny virus from cell to cell. Otherwise, infection would be limited to one round of replication. Described as a receptor-destroying enzyme because it cleaves a terminal sialic acid from the cellular receptors. May facilitate viral invasion of the upper airways by cleaving the sialic acid moieties on the mucin of the airway epithelial cells. Likely to plays a role in the budding process through its association with lipid rafts during intracellular transport. May additionally display a raft-association independent effect on budding. Plays a role in the determination of host range restriction on replication and virulence. Sialidase activity in late endosome/lysosome traffic seems to enhance virus replication. This chain is Neuraminidase, found in Influenza B virus (strain B/Maryland/1959).